Consider the following 926-residue polypeptide: MSRFFATGSDSESESSLSGDEILPKPVGGTFGKQPIILSDDEEDTKRVVRSAKDKRFEELTNLIKTIRNAMKIRDMTKCLEEFELLVKAFIKAKNIVDKEGVPRFYIRLLSDLDDYLNELWEDKEGKKKMNKNNAKALSTLRQKLRKYNRDFEASITAYKQNPEESADEDQEKDEDSEASSSSDDDSDEGMSASKFLKKAESAPPESRSKFLKKEEAEDEAESSEDEDWGSDSDESDSDESDDENKHASMASRFLKKTVTEGDRQAVEKKKEDKAKKKQHRKVKRKDEEGEEGEEDDNEGGGEWEKVKGGVPLVKEKPKMFAKGTEITPPIVVKKLNEILLARGKKGTDRAAQIELLQLLAGIAEENNLGQGIAVKIKFNIMASLYDYNTNLATYMKSDMWKKCLDCIHDLLDILFANSNMFIGEHIVEDSENLSNLEQPLRVRGCILTLIERMEEEFTKIMQNTDPHSQEYVDNLKDEARVCEVIERAQKYLQEKGSTEEICRVYLRRIMHTYYKFDYKAHQRQLSTEQESKSEQDQAENEAEDSAILMDRLCKYIYAKDRTDRIRTCAILCHIYHHALHNRWFQARDLMLMSHLQDNIQHADPPVQILYNRTMVQLGICAFRQGMIRDAHNALLDIQSSGRAKELLGQGLLMRTMQERNQEQEKIEKRRQIPFHMHINLELLECVYLVSAMLLEIPYMAAHEFDARRRMISKQFHHQLRVGERQPLLGPPESMREHVVAASKAMKMGDWKTCKNFIINEKMNGKVWDLFPEAERVRGMLVRKIQEESLRTYLFTYSSVYDSIRMGILGDMFQLEIPTVHSIISKMIINEELMASLDQPTQTVVMHGTEPSSLQNTALQLAEKLGNLVENNERIFDHKQGSYGGYFNRGDRGDRGDRDQKDQYQRKEGGYMRRGYRRDQQGQSNY.

Disordered stretches follow at residues 1 to 36 (MSRF…KQPI) and 158 to 309 (AYKQ…KVKG). Residues 8–21 (GSDSESESSLSGDE) show a composition bias toward low complexity. A compositionally biased stretch (acidic residues) spans 165 to 189 (ESADEDQEKDEDSEASSSSDDDSDE). Basic and acidic residues predominate over residues 207 to 216 (SRSKFLKKEE). The segment covering 217-243 (AEDEAESSEDEDWGSDSDESDSDESDD) has biased composition (acidic residues). Residues 258 to 275 (TVTEGDRQAVEKKKEDKA) are compositionally biased toward basic and acidic residues. Positions 289-302 (EGEEGEEDDNEGGG) are enriched in acidic residues. In terms of domain architecture, PCI spans 675-851 (FHMHINLELL…QTVVMHGTEP (177 aa)). A disordered region spans residues 880–926 (QGSYGGYFNRGDRGDRGDRDQKDQYQRKEGGYMRRGYRRDQQGQSNY). Residues 889–911 (RGDRGDRGDRDQKDQYQRKEGGY) show a composition bias toward basic and acidic residues.

This sequence belongs to the eIF-3 subunit C family. Component of the eukaryotic translation initiation factor 3 (eIF-3) complex, which is composed of 13 subunits: eif3a, eif3b, eif3c, eif3d, eif3e, eif3f, eif3g, eif3h, eif3i, eif3j, eif3k, eif3l and eif3m.

Its subcellular location is the cytoplasm. Component of the eukaryotic translation initiation factor 3 (eIF-3) complex, which is involved in protein synthesis of a specialized repertoire of mRNAs and, together with other initiation factors, stimulates binding of mRNA and methionyl-tRNAi to the 40S ribosome. The eIF-3 complex specifically targets and initiates translation of a subset of mRNAs involved in cell proliferation. The polypeptide is Eukaryotic translation initiation factor 3 subunit C (eif3c) (Xenopus laevis (African clawed frog)).